We begin with the raw amino-acid sequence, 415 residues long: Ubp4-interactor sfp47 (415 aa).

Residues serine 221 and serine 226 each carry the phosphoserine modification. At threonine 231 the chain carries Phosphothreonine. At serine 235 the chain carries Phosphoserine. The SH3 domain occupies 352 to 415; the sequence is PIFAYVRALY…PSNYIEELEY (64 aa).

Interacts with ubp4.

It is found in the cytoplasm. Its subcellular location is the endosome. In terms of biological role, required for the regulation of activity and recruitment of ubp4 to endosomes. The polypeptide is Ubp4-interactor sfp47 (sfp47) (Schizosaccharomyces pombe (strain 972 / ATCC 24843) (Fission yeast)).